The chain runs to 232 residues: Large ribosomal subunit protein uL1 (232 aa).

The protein belongs to the universal ribosomal protein uL1 family. As to quaternary structure, part of the 50S ribosomal subunit.

Its function is as follows. Binds directly to 23S rRNA. The L1 stalk is quite mobile in the ribosome, and is involved in E site tRNA release. Functionally, protein L1 is also a translational repressor protein, it controls the translation of the L11 operon by binding to its mRNA. This chain is Large ribosomal subunit protein uL1, found in Bartonella henselae (strain ATCC 49882 / DSM 28221 / CCUG 30454 / Houston 1) (Rochalimaea henselae).